A 486-amino-acid chain; its full sequence is uncharacterized protein (486 aa).

9 LRR repeats span residues 18–39, 43–59, 60–81, 82–103, 104–125, 126–147, 148–168, 169–190, and 198–219; these read NLKK…KKLV, ELHI…NIPE, NIKS…TKLK, NITY…ILPH, SIEF…NNLV, NLKK…FPIS, IVEL…EKLI, NLKK…IKFP, and DYQS…IEYE.

This is an uncharacterized protein from Amsacta moorei entomopoxvirus (AmEPV).